The sequence spans 142 residues: UPF0102 protein PsycPRwf_0497 (142 aa).

It belongs to the UPF0102 family.

The protein is UPF0102 protein PsycPRwf_0497 of Psychrobacter sp. (strain PRwf-1).